A 507-amino-acid chain; its full sequence is ATP synthase subunit alpha, chloroplastic (507 aa).

170–177 contacts ATP; sequence GDRQTGKT.

It belongs to the ATPase alpha/beta chains family. F-type ATPases have 2 components, CF(1) - the catalytic core - and CF(0) - the membrane proton channel. CF(1) has five subunits: alpha(3), beta(3), gamma(1), delta(1), epsilon(1). CF(0) has four main subunits: a, b, b' and c.

It localises to the plastid. It is found in the chloroplast thylakoid membrane. It catalyses the reaction ATP + H2O + 4 H(+)(in) = ADP + phosphate + 5 H(+)(out). In terms of biological role, produces ATP from ADP in the presence of a proton gradient across the membrane. The alpha chain is a regulatory subunit. The protein is ATP synthase subunit alpha, chloroplastic of Amborella trichopoda.